A 494-amino-acid chain; its full sequence is Probable cytosol aminopeptidase (494 aa).

Mn(2+) is bound by residues Lys260 and Asp265. Lys272 is a catalytic residue. Mn(2+) contacts are provided by Asp283, Asp342, and Glu344. Residue Arg346 is part of the active site.

The protein belongs to the peptidase M17 family. Mn(2+) serves as cofactor.

It localises to the cytoplasm. The enzyme catalyses Release of an N-terminal amino acid, Xaa-|-Yaa-, in which Xaa is preferably Leu, but may be other amino acids including Pro although not Arg or Lys, and Yaa may be Pro. Amino acid amides and methyl esters are also readily hydrolyzed, but rates on arylamides are exceedingly low.. It carries out the reaction Release of an N-terminal amino acid, preferentially leucine, but not glutamic or aspartic acids.. Presumably involved in the processing and regular turnover of intracellular proteins. Catalyzes the removal of unsubstituted N-terminal amino acids from various peptides. This is Probable cytosol aminopeptidase from Bacillus thuringiensis subsp. konkukian (strain 97-27).